Here is a 298-residue protein sequence, read N- to C-terminus: ADP-ribosyl cyclase/cyclic ADP-ribose hydrolase 1 (298 aa).

Residues 1 to 21 (MPDYEFSPASGDRPRSWISKQ) are Cytoplasmic-facing. The helical; Signal-anchor for type II membrane protein transmembrane segment at 22 to 42 (VLIVLGVCLPVILALAIWVGV) threads the bilayer. The Extracellular segment spans residues 43–298 (LTWRQSSMGA…PEHPSCSVLM (256 aa)). Cystine bridges form between C64-C80, C97-C178, and C158-C171. N98 carries an N-linked (GlcNAc...) asparagine glycan. C117 is a catalytic residue. N118 carries N-linked (GlcNAc...) asparagine glycosylation. N177 is a glycosylation site (N-linked (GlcNAc...) asparagine). The active site involves C199. N-linked (GlcNAc...) asparagine glycans are attached at residues N207 and N268. Intrachain disulfides connect C252–C273 and C285–C294.

The protein belongs to the ADP-ribosyl cyclase family. In terms of assembly, homodimer. As to expression, osteoclasts.

It localises to the cell membrane. The protein localises to the microsome membrane. The protein resides in the endoplasmic reticulum membrane. It carries out the reaction NAD(+) = cyclic ADP-beta-D-ribose + nicotinamide + H(+). It catalyses the reaction 2'-phospho-cyclic ADP-ribose + nicotinate = nicotinate-adenine dinucleotide phosphate. The catalysed reaction is NAD(+) + H2O = ADP-D-ribose + nicotinamide + H(+). The enzyme catalyses nicotinate + NADP(+) = nicotinate-adenine dinucleotide phosphate + nicotinamide. Functionally, synthesizes cyclic ADP-ribose (cADPR), a second messenger for glucose-induced insulin secretion. Synthesizes the Ca(2+) mobilizer nicotinate-adenine dinucleotide phosphate, NAADP(+), from 2'-phospho-cADPR and nicotinic acid, as well as from NADP(+) and nicotinic acid. Also has cADPR hydrolase activity. In Oryctolagus cuniculus (Rabbit), this protein is ADP-ribosyl cyclase/cyclic ADP-ribose hydrolase 1 (CD38).